Here is a 1972-residue protein sequence, read N- to C-terminus: Myosin-11 (1972 aa).

Phosphoserine is present on residues Ser-8, Ser-23, and Ser-40. The 51-residue stretch at 31 to 81 (AAKRLVWVPSEKQGFEAASIKEEKGDEVVVELVENGKKVTVGKDDIQKMNP) folds into the Myosin N-terminal SH3-like domain. A Myosin motor domain is found at 85–783 (SKVEDMAELT…VLAHLEEERD (699 aa)). Residue Lys-129 is modified to N6,N6,N6-trimethyllysine. Residue 178-185 (GESGAGKT) participates in ATP binding. 2 actin-binding regions span residues 661 to 683 (LGKL…IPNH) and 762 to 776 (RIGQ…GVLA). The IQ domain occupies 786–815 (ITDVIMAFQAMCRGYLARKAFAKRQQQLTA). The stretch at 844 to 1934 (LLQVTRQEEE…KSKLRRGNET (1091 aa)) forms a coiled coil. Residues 858–882 (EDELQKTKERQQKAENELKELEQKH) form a disordered region. Thr-1177 carries the post-translational modification Phosphothreonine. Phosphoserine occurs at positions 1684 and 1722. Disordered regions lie at residues 1744-1800 (ELEE…LRSK) and 1866-1972 (EQYK…KASE). Positions 1762 to 1788 (ATQQAEQLSNELATERSTAQKNESARQ) are enriched in polar residues. 2 stretches are compositionally biased toward basic and acidic residues: residues 1789 to 1800 (QLERQNKELRSK) and 1866 to 1876 (EQYKEQAEKGN). The interval 1935-1972 (SFVPSRRSGGRRVIENADGSEEETDTRDADFNGTKASE) is C-terminal. Position 1954 is a phosphoserine (Ser-1954). Thr-1958 carries the post-translational modification Phosphothreonine. Phosphoserine is present on Ser-1971.

It belongs to the TRAFAC class myosin-kinesin ATPase superfamily. Myosin family. Muscle myosin is a hexameric protein that consists of 2 heavy chain subunits (MHC), 2 alkali light chain subunits (MLC) and 2 regulatory light chain subunits (MLC-2). As to expression, smooth muscle; expressed in the umbilical artery, bladder, esophagus and trachea. Isoform 1 is mostly found in slowly contracting tonic muscles.

It is found in the melanosome. Muscle contraction. The sequence is that of Myosin-11 (MYH11) from Homo sapiens (Human).